The primary structure comprises 75 residues: UPF0352 protein PMI0824 (75 aa).

The protein belongs to the UPF0352 family.

The sequence is that of UPF0352 protein PMI0824 from Proteus mirabilis (strain HI4320).